The sequence spans 24 residues: 33.0 kDa cold shock protein (24 aa).

Belongs to the thaumatin family. Homooligomer; disulfide-linked. Glycosylated.

The protein localises to the secreted. It localises to the extracellular space. Its subcellular location is the apoplast. In Arachis hypogaea (Peanut), this protein is 33.0 kDa cold shock protein.